A 474-amino-acid chain; its full sequence is tRNA-2-methylthio-N(6)-dimethylallyladenosine synthase (474 aa).

The 118-residue stretch at 3–120 (KKLHIKTWGC…LPEMINHVQG (118 aa)) folds into the MTTase N-terminal domain. Residues Cys12, Cys49, Cys83, Cys157, Cys161, and Cys164 each coordinate [4Fe-4S] cluster. The Radical SAM core domain occupies 143-375 (RADGPTAFVS…QDRITKQAMR (233 aa)). Residues 378–441 (RLMLGTVQRI…TNSLRGIVVR (64 aa)) form the TRAM domain.

This sequence belongs to the methylthiotransferase family. MiaB subfamily. As to quaternary structure, monomer. It depends on [4Fe-4S] cluster as a cofactor.

The protein localises to the cytoplasm. The enzyme catalyses N(6)-dimethylallyladenosine(37) in tRNA + (sulfur carrier)-SH + AH2 + 2 S-adenosyl-L-methionine = 2-methylsulfanyl-N(6)-dimethylallyladenosine(37) in tRNA + (sulfur carrier)-H + 5'-deoxyadenosine + L-methionine + A + S-adenosyl-L-homocysteine + 2 H(+). Catalyzes the methylthiolation of N6-(dimethylallyl)adenosine (i(6)A), leading to the formation of 2-methylthio-N6-(dimethylallyl)adenosine (ms(2)i(6)A) at position 37 in tRNAs that read codons beginning with uridine. The protein is tRNA-2-methylthio-N(6)-dimethylallyladenosine synthase of Pectobacterium atrosepticum (strain SCRI 1043 / ATCC BAA-672) (Erwinia carotovora subsp. atroseptica).